The following is a 174-amino-acid chain: Mytilin-3 (174 aa).

A signal peptide spans 1–16; it reads MLKGIILIVTIQLVNA.

Component of the organic matrix of calcified shell layers like nacre and prisms.

It is found in the secreted. The sequence is that of Mytilin-3 from Mytilus californianus (California mussel).